Here is a 1117-residue protein sequence, read N- to C-terminus: Protein ECM21 (1117 aa).

Disordered stretches follow at residues 1-48 (MPFI…RRSS) and 63-155 (VHSP…YSQI). A compositionally biased stretch (polar residues) spans 11–34 (KNSSHSLSETDLNQSKGQPFQPSP). S18 is modified (phosphoserine). A compositionally biased stretch (low complexity) spans 70–81 (NNTTKGGNNNGN). Position 115 is a phosphoserine (S115). Residues 117–130 (SDSATTTPRSSTSD) are compositionally biased toward low complexity. S140 carries the phosphoserine modification. K191 is covalently cross-linked (Glycyl lysine isopeptide (Lys-Gly) (interchain with G-Cter in ubiquitin)). Disordered stretches follow at residues 275 to 312 (ATTA…ELNT) and 486 to 523 (YRQD…AQAH). Position 286 is a phosphoserine (S286). The span at 501–519 (SSSSLSSTTSSLKLTETES) shows a compositional bias: low complexity. S527 and S550 each carry phosphoserine. Glycyl lysine isopeptide (Lys-Gly) (interchain with G-Cter in ubiquitin) cross-links involve residues K577, K651, and K712. Residue S775 is modified to Phosphoserine. Glycyl lysine isopeptide (Lys-Gly) (interchain with G-Cter in ubiquitin) cross-links involve residues K794, K807, and K1024. 2 disordered regions span residues 1016–1065 (RSRF…KDKQ) and 1079–1117 (KDDE…SDEE). Residues 1027–1059 (STPSPVNRSHNSSPTNGLSQANGTVRIPNATTE) show a composition bias toward polar residues. At S1035 the chain carries Phosphoserine. Residues 1089–1098 (SSSSADSLLS) show a composition bias toward low complexity.

Belongs to the CSR2 family.

Its subcellular location is the cytoplasm. May be involved in cell wall organization and biogenesis. The chain is Protein ECM21 (ECM21) from Saccharomyces cerevisiae (strain ATCC 204508 / S288c) (Baker's yeast).